A 389-amino-acid chain; its full sequence is PqqA peptide cyclase (389 aa).

The Radical SAM core domain occupies 19–234 (VGLPLWLLAE…TNEYRARLEA (216 aa)). [4Fe-4S] cluster-binding residues include Cys-33, Cys-37, and Cys-40.

It belongs to the radical SAM superfamily. PqqE family. In terms of assembly, interacts with PqqD. The interaction is necessary for activity of PqqE. The cofactor is [4Fe-4S] cluster.

It carries out the reaction [PQQ precursor protein] + S-adenosyl-L-methionine = E-Y cross-linked-[PQQ precursor protein] + 5'-deoxyadenosine + L-methionine + H(+). The protein operates within cofactor biosynthesis; pyrroloquinoline quinone biosynthesis. Functionally, catalyzes the cross-linking of a glutamate residue and a tyrosine residue in the PqqA protein as part of the biosynthesis of pyrroloquinoline quinone (PQQ). This is PqqA peptide cyclase from Pseudomonas syringae pv. syringae (strain B728a).